The chain runs to 157 residues: ATP synthase subunit b' (157 aa).

Residues 22–42 traverse the membrane as a helical segment; sequence ATLPIIAVQFLLLVAVLNSLF.

Belongs to the ATPase B chain family. In terms of assembly, F-type ATPases have 2 components, F(1) - the catalytic core - and F(0) - the membrane proton channel. F(1) has five subunits: alpha(3), beta(3), gamma(1), delta(1), epsilon(1). F(0) has four main subunits: a(1), b(1), b'(1) and c(10-14). The alpha and beta chains form an alternating ring which encloses part of the gamma chain. F(1) is attached to F(0) by a central stalk formed by the gamma and epsilon chains, while a peripheral stalk is formed by the delta, b and b' chains.

Its subcellular location is the cellular thylakoid membrane. F(1)F(0) ATP synthase produces ATP from ADP in the presence of a proton or sodium gradient. F-type ATPases consist of two structural domains, F(1) containing the extramembraneous catalytic core and F(0) containing the membrane proton channel, linked together by a central stalk and a peripheral stalk. During catalysis, ATP synthesis in the catalytic domain of F(1) is coupled via a rotary mechanism of the central stalk subunits to proton translocation. Its function is as follows. Component of the F(0) channel, it forms part of the peripheral stalk, linking F(1) to F(0). The b'-subunit is a diverged and duplicated form of b found in plants and photosynthetic bacteria. This Synechococcus sp. (strain JA-3-3Ab) (Cyanobacteria bacterium Yellowstone A-Prime) protein is ATP synthase subunit b'.